Reading from the N-terminus, the 2483-residue chain is Cation-independent mannose-6-phosphate receptor (2483 aa).

The N-terminal stretch at methionine 1–alanine 35 is a signal peptide. The Lumenal segment spans residues glutamine 36–alanine 2295. MRH domains lie at alanine 42–lysine 158, valine 167–arginine 315, glutamate 321–lysine 463, leucine 468–leucine 613, glutamate 619–glutamate 755, leucine 758–isoleucine 917, glutamine 925–proline 1072, valine 1075–valine 1212, and aspartate 1218–proline 1356. Cystine bridges form between cysteine 44-cysteine 64 and cysteine 72-cysteine 79. Asparagine 107 is a glycosylation site (N-linked (GlcNAc...) asparagine). 8 disulfides stabilise this stretch: cysteine 112–cysteine 144, cysteine 129–cysteine 156, cysteine 169–cysteine 207, cysteine 223–cysteine 230, cysteine 270–cysteine 301, cysteine 283–cysteine 313, cysteine 323–cysteine 361, and cysteine 369–cysteine 377. N-linked (GlcNAc...) asparagine glycosylation is found at asparagine 395 and asparagine 430. 4 disulfides stabilise this stretch: cysteine 415-cysteine 449, cysteine 429-cysteine 461, cysteine 470-cysteine 513, and cysteine 525-cysteine 532. Residues asparagine 537 and asparagine 575 are each glycosylated (N-linked (GlcNAc...) asparagine). 2 disulfide bridges follow: cysteine 566-cysteine 599 and cysteine 580-cysteine 611. Asparagine 620 is a glycosylation site (N-linked (GlcNAc...) asparagine). 5 disulfide bridges follow: cysteine 621–cysteine 658, cysteine 666–cysteine 673, cysteine 724–cysteine 753, cysteine 760–cysteine 807, and cysteine 816–cysteine 823. A glycan (N-linked (GlcNAc...) asparagine) is linked at asparagine 740. N-linked (GlcNAc...) asparagine glycosylation occurs at asparagine 864. Cystine bridges form between cysteine 868/cysteine 903, cysteine 886/cysteine 915, cysteine 927/cysteine 964, cysteine 970/cysteine 981, cysteine 1035/cysteine 1070, cysteine 1077/cysteine 1118, and cysteine 1127/cysteine 1135. Asparagine 944 carries an N-linked (GlcNAc...) asparagine glycan. N-linked (GlcNAc...) asparagine glycosylation occurs at asparagine 1157. 4 cysteine pairs are disulfide-bonded: cysteine 1170/cysteine 1198, cysteine 1183/cysteine 1210, cysteine 1220/cysteine 1255, and cysteine 1263/cysteine 1275. A glycan (N-linked (GlcNAc...) asparagine) is linked at asparagine 1239. Asparagine 1305 carries N-linked (GlcNAc...) asparagine glycosylation. Cystine bridges form between cysteine 1312-cysteine 1342 and cysteine 1326-cysteine 1354. N-linked (GlcNAc...) asparagine glycosylation is present at asparagine 1358. MRH domains lie at threonine 1360–valine 1501, aspartate 1507–glutamine 1641, threonine 1643–aspartate 1790, glutamine 1795–proline 1982, methionine 1985–valine 2120, and valine 2128–leucine 2273. 2 cysteine pairs are disulfide-bonded: cysteine 1362/cysteine 1401 and cysteine 1413/cysteine 1420. Asparagine 1423 carries an N-linked (GlcNAc...) asparagine glycan. 20 cysteine pairs are disulfide-bonded: cysteine 1454/cysteine 1487, cysteine 1469/cysteine 1499, cysteine 1509/cysteine 1546, cysteine 1552/cysteine 1559, cysteine 1591/cysteine 1627, cysteine 1607/cysteine 1639, cysteine 1645/cysteine 1688, cysteine 1699/cysteine 1706, cysteine 1743/cysteine 1776, cysteine 1759/cysteine 1788, cysteine 1797/cysteine 1832, cysteine 1843/cysteine 1849, cysteine 1886/cysteine 1968, cysteine 1896/cysteine 1920, cysteine 1910/cysteine 1935, cysteine 1950/cysteine 1980, cysteine 1987/cysteine 2022, cysteine 2032/cysteine 2039, cysteine 2075/cysteine 2106, and cysteine 2089/cysteine 2118. The N-linked (GlcNAc...) asparagine glycan is linked to asparagine 1532. The N-linked (GlcNAc...) asparagine glycan is linked to asparagine 1649. N-linked (GlcNAc...) asparagine glycosylation is present at asparagine 1750. An N-linked (GlcNAc...) asparagine glycan is attached at asparagine 1809. One can recognise a Fibronectin type-II domain in the interval aspartate 1891–glutamine 1937. The N-linked (GlcNAc...) asparagine glycan is linked to asparagine 2078. Asparagine 2129 carries an N-linked (GlcNAc...) asparagine glycan. 3 disulfides stabilise this stretch: cysteine 2181-cysteine 2187, cysteine 2225-cysteine 2259, and cysteine 2241-cysteine 2271. Residues valine 2296–leucine 2316 form a helical membrane-spanning segment. The Cytoplasmic segment spans residues histidine 2317–isoleucine 2483. Lysine 2342 bears the N6-acetyllysine mark. A Phosphoserine modification is found at serine 2401. The interval serine 2415–isoleucine 2483 is disordered. The residue at position 2417 (arginine 2417) is an Omega-N-methylarginine. Composition is skewed to basic and acidic residues over residues valine 2434 to alanine 2451 and serine 2471 to isoleucine 2483. Residues serine 2471 and serine 2476 each carry the phosphoserine modification.

This sequence belongs to the MRL1/IGF2R family. As to quaternary structure, binds HA-I and HA-II plasma membrane adapters. Interacts with DPP4; the interaction is direct. Binds GGA1, GGA2 and GGA3. Interacts with the heterotrimeric retromer cargo-selective complex (CSC), formed by VPS26 (VPS26A or VPS26B), VPS29 and VPS35; which is involved in retrograde trafficking of the receptor from endosomes to the Golgi apparatus. Post-translationally, palmitoylated. Undergoes cysteine S-palmitoylation which promotes interaction with the retromer cargo-selective complex which mediates its retrograde trafficking to the Golgi apparatus.

It localises to the golgi apparatus membrane. It is found in the endosome membrane. Functionally, mediates the transport of phosphorylated lysosomal enzymes from the Golgi complex and the cell surface to lysosomes. Lysosomal enzymes bearing phosphomannosyl residues bind specifically to mannose-6-phosphate receptors in the Golgi apparatus and the resulting receptor-ligand complex is transported to an acidic prelysosomal compartment where the low pH mediates the dissociation of the complex. The receptor is then recycled back to the Golgi for another round of trafficking through its binding to the retromer. This receptor also binds IGF2. Acts as a positive regulator of T-cell coactivation by binding DPP4. This is Cation-independent mannose-6-phosphate receptor (Igf2r) from Mus musculus (Mouse).